Here is a 642-residue protein sequence, read N- to C-terminus: Threonine--tRNA ligase (642 aa).

The 61-residue stretch at 1–61 folds into the TGS domain; sequence MPVITLPDGS…ENDATLSIIT (61 aa). The segment at 243-534 is catalytic; that stretch reads DHRKIGKQLD…LTEEFAGFFP (292 aa). Positions 334, 385, and 511 each coordinate Zn(2+).

This sequence belongs to the class-II aminoacyl-tRNA synthetase family. Homodimer. Zn(2+) is required as a cofactor.

The protein localises to the cytoplasm. The catalysed reaction is tRNA(Thr) + L-threonine + ATP = L-threonyl-tRNA(Thr) + AMP + diphosphate + H(+). Its function is as follows. Catalyzes the attachment of threonine to tRNA(Thr) in a two-step reaction: L-threonine is first activated by ATP to form Thr-AMP and then transferred to the acceptor end of tRNA(Thr). Also edits incorrectly charged L-seryl-tRNA(Thr). The protein is Threonine--tRNA ligase of Salmonella paratyphi A (strain ATCC 9150 / SARB42).